We begin with the raw amino-acid sequence, 397 residues long: Multidrug resistance protein MdtH (397 aa).

The next 11 membrane-spanning stretches (helical) occupy residues 11–31 (WFLA…MPMI), 32–52 (SLRF…ALGL), 71–91 (FGAR…FASL), 94–114 (AQSG…GCLF), 137–157 (LLMM…SWLL), 163–183 (YVCL…LLIL), 211–231 (LVLI…IFPI), 242–262 (AVGW…YPLA), 291–311 (FANT…GIVI), 340–360 (LALG…YAML), and 366–386 (LPWL…VNCF).

This sequence belongs to the major facilitator superfamily. DHA1 family. MdtH (TC 2.A.1.2.21) subfamily.

It localises to the cell inner membrane. The chain is Multidrug resistance protein MdtH from Aeromonas hydrophila subsp. hydrophila (strain ATCC 7966 / DSM 30187 / BCRC 13018 / CCUG 14551 / JCM 1027 / KCTC 2358 / NCIMB 9240 / NCTC 8049).